The chain runs to 376 residues: WD repeat-containing protein wdr-5.1 (376 aa).

Residues 1-24 (MDTSENAASAAEQQPTQQIDQLTV) are compositionally biased toward polar residues. Residues 1–70 (MDTSENAASA…TPNPNAAGAS (70 aa)) are disordered. Low complexity predominate over residues 25-53 (PNAPDGGSSAPAPSTSPNSISPSNPTGTP). 7 WD repeats span residues 85 to 115 (GHTK…KIWN), 127 to 157 (GHKL…KIFE), 169 to 199 (GHNN…RIWD), 211 to 241 (AHSD…RIWD), 254 to 284 (DENP…KLWD), 296 to 329 (GHEN…YIWN), and 341 to 373 (GHTQ…HIWR).

The protein belongs to the WD repeat WDR5/wds family. As to quaternary structure, component of the SET2 complex (also known as the SET1/COMPASS complex), which contains at least set-2, swd-2.1, cfp-1, rbbp-5, wdr-5.1, dpy-30 and ash-2. Within the complex, interacts with cfp-1, ash-2, dpy-30 and hda-1. Interacts with histone H3 both unmethylated and methylated at 'Lys-4'. Interacts with jmjd-3.1, ceh-6, sox-2, sem-4 and egl-27. Interacts with set-2. Enriched in the germline. Detected in all nuclei of the embryo. In larvae, expression is detected in the nuclei of seam cells, somatic gonad precursor cells Z1 and Z4, vulval precursor cells, distal tip cells, hypodermal cells, intestinal and muscle cells. Also detected in the neurons from the ventral nerve cord, head and tail region. Expressed in the head and tail region, intestinal cells, muscle cells, cells of the vulva, spermatheca and sheath cells in adults.

It localises to the nucleus. Its function is as follows. Contributes to histone modification. May position the N-terminus of histone H3 for efficient trimethylation at 'Lys-4'. Required for di- and trimethylation, particularly for the trimethylation at 'Lys-4' of histone H3. Not required for demethylation of histone H3 'Lys-27'. H3 'Lys-4' methylation represents a specific tag for epigenetic transcriptional activation, germline establishment, maintenance and function. Implicated in the epigenetic inheritance of lifespan over several generations. Acts in the germline to limit the longevity of the soma, probably by regulating a lipid metabolism pathway that signals from the germline to the intestine, thereby preventing accumulation of mono-unsaturated fatty acids. Required for RNA interference with probable antagonistic role against hpl-2 function. Plays a role in vulval cell fate specification by acting in the synthetic multivulva pathway independent of set-2. Sex determining protein required in the germline to promote the spermatogenesis to oogenesis switch during the late larval stages of development. Acts with the sex determining factor tra-1, and redundantly with wdr-5.2, to regulate fog-3 expression, which in turn determines germ cell fate. Cooperates with jmjd-3.1, egl-27 and unc-3 to ensure robust transdifferentiation of the Y rectal cell to the PDA motor neuron during larval development. This is WD repeat-containing protein wdr-5.1 (wdr-5.1) from Caenorhabditis elegans.